Consider the following 146-residue polypeptide: VHLTAAEKSAILDLWGKVNVGEIGAEALGRLLVVYPWTQRFFEKFGDLSSASAIMSNAHVKSHGAKVLASFSEGLKHLQDLKGTFAKLSELHCDKLHVDPENFRLLGNMIVIALAHHHPSEFTPCTQAAFQKVTAGVANALAHKYH.

Val-1 is subject to N-acetylvaline. The 145-residue stretch at 2–146 (HLTAAEKSAI…VANALAHKYH (145 aa)) folds into the Globin domain. Heme b is bound at residue His-63. Residue Lys-82 is modified to N6-acetyllysine. Heme b is bound at residue His-92. Residue Cys-93 is modified to S-nitrosocysteine. Lys-144 carries the N6-acetyllysine modification.

The protein belongs to the globin family. Heterotetramer of two alpha chains and two beta chains. Red blood cells.

Functionally, involved in oxygen transport from the lung to the various peripheral tissues. In Cavia porcellus (Guinea pig), this protein is Hemoglobin subunit beta (HBB).